The chain runs to 231 residues: Endonuclease NucS (231 aa).

It belongs to the NucS endonuclease family.

The protein resides in the cytoplasm. Its function is as follows. Cleaves both 3' and 5' ssDNA extremities of branched DNA structures. This is Endonuclease NucS from Pseudarthrobacter chlorophenolicus (strain ATCC 700700 / DSM 12829 / CIP 107037 / JCM 12360 / KCTC 9906 / NCIMB 13794 / A6) (Arthrobacter chlorophenolicus).